An 807-amino-acid chain; its full sequence is Spondin-1 (807 aa).

A signal peptide spans 1–28 (MRLSPVSLRLSRGPALLALALPLAAALA). The Reelin domain maps to 29–194 (FSDETLDKVT…DPTLDGVTDR (166 aa)). 17 disulfides stabilise this stretch: C44-C128, C156-C182, C199-C336, C200-C340, C202-C415, C443-C480, C454-C489, C459-C494, C502-C538, C513-C517, C548-C554, C559-C595, C570-C574, C605-C610, C615-C650, C626-C630, and C660-C665. A Spondin domain is found at 195–388 (PILDCCACGT…LTSLDHPQSP (194 aa)). N214 carries N-linked (GlcNAc...) asparagine glycosylation. Ca(2+) is bound by residues D325, D354, and D358. 5 TSP type-1 domains span residues 442–495 (TCIY…PGCS), 501–555 (TCTM…EECS), 558–611 (SCLV…PECH), 614–666 (PCLL…PECP), and 668–721 (DCEL…RKCL). An N-linked (GlcNAc...) asparagine glycan is attached at N681. The span at 732–746 (REARESRRSEQLREE) shows a compositional bias: basic and acidic residues. Residues 732–752 (REARESRRSEQLREESDGEQF) form a disordered region. In terms of domain architecture, TSP type-1 6 spans 754–806 (GCRMRPWTAWSECTKLCGGGIQERYMTVKKRFKSSQFTSCKDKKEIRACNVHP).

In terms of assembly, binds to the central extracellular domain of APP and inhibits beta-secretase cleavage of APP.

Its subcellular location is the secreted. It is found in the extracellular space. The protein resides in the extracellular matrix. Its function is as follows. Cell adhesion protein that promotes the attachment of spinal cord and sensory neuron cells and the outgrowth of neurites in vitro. May contribute to the growth and guidance of axons in both the spinal cord and the PNS. This is Spondin-1 (Spon1) from Mus musculus (Mouse).